The following is a 259-amino-acid chain: MKITLNSVSFRYNGDYVLKDVNAEFETGKIYVVVGKNGSGKTTLLKILAGLLEAEGEIFLDGSPADPFLLRKNVGYVFQNPSSQIIGATVEEDVAFSLEIMGLDESEMRKRIKKVLELVGLSGLEKEDPLNLSGGQKQRLAIASMLARDTRFLALDEPVSMLDPPSQREIFQVLESLKNEGKGIILVTHELEYLDDMDFILHISNGTIDFCGSWEEFVEREFDDVEIPFKWKLWKKCGKINLWEDRYENSGNQRRRDTV.

An ABC transporter domain is found at 3–230 (ITLNSVSFRY…EFDDVEIPFK (228 aa)). 38 to 43 (GSGKTT) is a binding site for ATP. Glu-157 (proton acceptor) is an active-site residue.

This sequence belongs to the ABC transporter superfamily. Energy-coupling factor EcfA family. In terms of assembly, forms a heterodimer with EcfA2. Forms a stable energy-coupling factor (ECF) transporter complex composed of 2 membrane-embedded substrate-binding proteins (S component, RibU, BioY), 2 ATP-binding proteins (A component) and 2 transmembrane proteins (T component) upon coexpression in E.coli. Stable subcomplexes with both A plus T components can also be isolated. This complex interacts with at least 2 substrate-specific components, BioY and RibU.

It localises to the cell inner membrane. Its function is as follows. ATP-binding (A) component of a common energy-coupling factor (ECF) ABC-transporter complex. Unlike classic ABC transporters this ECF transporter provides the energy necessary to transport a number of different substrates. Expression of the complex plus RibU in E.coli allows riboflavin uptake; uptake does not occur in the absence of RibU or the EcfA1A2T complex. This is Energy-coupling factor transporter ATP-binding protein EcfA1 from Thermotoga maritima (strain ATCC 43589 / DSM 3109 / JCM 10099 / NBRC 100826 / MSB8).